Consider the following 95-residue polypeptide: Aspartyl/glutamyl-tRNA(Asn/Gln) amidotransferase subunit C (95 aa).

The protein belongs to the GatC family. As to quaternary structure, heterotrimer of A, B and C subunits.

It catalyses the reaction L-glutamyl-tRNA(Gln) + L-glutamine + ATP + H2O = L-glutaminyl-tRNA(Gln) + L-glutamate + ADP + phosphate + H(+). The catalysed reaction is L-aspartyl-tRNA(Asn) + L-glutamine + ATP + H2O = L-asparaginyl-tRNA(Asn) + L-glutamate + ADP + phosphate + 2 H(+). Functionally, allows the formation of correctly charged Asn-tRNA(Asn) or Gln-tRNA(Gln) through the transamidation of misacylated Asp-tRNA(Asn) or Glu-tRNA(Gln) in organisms which lack either or both of asparaginyl-tRNA or glutaminyl-tRNA synthetases. The reaction takes place in the presence of glutamine and ATP through an activated phospho-Asp-tRNA(Asn) or phospho-Glu-tRNA(Gln). This chain is Aspartyl/glutamyl-tRNA(Asn/Gln) amidotransferase subunit C, found in Bradyrhizobium sp. (strain BTAi1 / ATCC BAA-1182).